A 1031-amino-acid chain; its full sequence is Toll-like receptor 9 (1031 aa).

The first 25 residues, 1 to 25 (MGPCHGALQPLSLLVQAAMLAVALA), serve as a signal peptide directing secretion. The Extracellular portion of the chain corresponds to 26 to 817 (QGTLPPFLPC…LCLDESLSWD (792 aa)). A disulfide bond links C35 and C45. 47–51 (WLFLK) serves as a coordination point for DNA. LRR repeat units lie at residues 62 to 85 (RDNVTSLSLLSNRIHHLHDSDFAQ), 87 to 110 (SNLQKLNLKWNCPPAGLSPMHFPC), 122 to 147 (VPTLEELNLSYNGITTVPALPSSLVS), 150 to 166 (LSRTNILQLDPTSLTGL), 167 to 190 (HALRFLYMDGNCYYKNPCGRALEV), 198 to 221 (LGNLTHLSLKYNNLTTVPRSLPPS), 223 to 242 (EYLLLSYNHIVTLAPEDLAN), 243 to 268 (LTALRVLDVGGNCRRCDHARNPCVEC), 283 to 306 (LSRLEGLVLKDSSLYQLNPRWFRG), 308 to 332 (GNLTVLDLSENFLYDCITKTKAFQG), 333 to 356 (LAQLRRLNLSFNYHKKVSFAHLTL), 363 to 386 (LLSLQELDMHGIFFRSLSQKTLQP), 390 to 413 (LPMLQRLYLQMNFINQAQLGIFKD), 414 to 438 (FPGLRYIDLSDNRISGAVEPVATTG), 470 to 494 (CKNLSFTLDLSRNNLVTVQPEMFAQ), 496 to 519 (SRLQCLRLSHNSISQAVNGSQFVP), 520 to 543 (LTSLQVLDLSHNKLDLYHGRSFTE), 545 to 567 (PRLEALDLSYNSQPFSMRGVGHN), 574 to 598 (LPTLRYLSLAHNGIHSRVSQQLCST), 600 to 622 (LWALDFSGNSLSQMWAEGDLYLR), 627 to 650 (LRSLIRLDLSQNRLHTLLPCTLGN), 652 to 675 (PKSLQLLRLRNNYLAFFNWSSLTL), 676 to 699 (LPNLETLDLAGNQLKALSNGSLPS), 701 to 723 (TQLQRLDVSRNSIIFVVPGFFAL), 724 to 747 (ATRLRELNLSANALRTVEPSWFGF), and 749 to 772 (AGSLEVLDVSANPLHCACGAAFVD). N-linked (GlcNAc...) asparagine glycosylation is present at N64. DNA is bound by residues 72–77 (SNRIHH) and 95–109 (KWNCPPAGLSPMHFP). C98 and C110 are disulfide-bonded. A glycan (N-linked (GlcNAc...) asparagine) is linked at N129. DNA is bound by residues Y132, R152, and 179–181 (YYK). C178 and C184 are oxidised to a cystine. The N-linked (GlcNAc...) asparagine glycan is linked to N200. Y208 serves as a coordination point for DNA. N-linked (GlcNAc...) asparagine glycans are attached at residues N210 and N242. Disulfide bonds link C255–C268 and C258–C265. Residue C258 is the site of S-palmitoyl cysteine attachment. R262 contacts DNA. A lipid anchor (S-palmitoyl cysteine) is attached at C265. N-linked (GlcNAc...) asparagine glycosylation is found at N309 and N340. C470 and C500 are disulfide-bonded. 2 N-linked (GlcNAc...) asparagine glycosylation sites follow: N472 and N513. Residue N567 is glycosylated (N-linked (GlcNAc...) asparagine). 2 N-linked (GlcNAc...) asparagine glycosylation sites follow: N669 and N694. N-linked (GlcNAc...) asparagine glycosylation is present at N731. Cystine bridges form between C764–C790 and C766–C809. Residues 818 to 838 (CFGLSLLVVALGLAMPMLHHL) traverse the membrane as a helical segment. At 839 to 1031 (CGWDLWYCFH…NFCRGPTMAE (193 aa)) the chain is on the cytoplasmic side. The region spanning 866 to 1011 (LSYDAFVVFD…SFWAQLGMAL (146 aa)) is the TIR domain.

The protein belongs to the Toll-like receptor family. In terms of assembly, monomer and homodimer. Exists as a monomer in the absence of unmethylated cytidine-phosphate-guanosine (CpG) ligand. Proteolytic processing of an insertion loop (Z-loop) is required for homodimerization upon binding to the unmethylated CpG ligand leading to its activation. Interacts with MYD88 via their respective TIR domains. Interacts with BTK. Interacts (via transmembrane domain) with UNC93B1. Interacts with CD300LH; the interaction may promote full activation of TLR9-triggered innate responses. Interacts with CNPY3 and HSP90B1; this interaction is required for proper folding in the endoplasmic reticulum. Interacts with SMPDL3B. Interacts with CD82; this interaction is essential for TLR9-dependent myddosome formation in response to CpG stimulation. Post-translationally, activated by proteolytic cleavage of the flexible loop between repeats LRR14 and LRR15 within the ectodomain. Cleavage requires UNC93B1. Proteolytically processed by first removing the majority of the ectodomain by either asparagine endopeptidase (AEP) or a cathepsin followed by a trimming event that is solely cathepsin mediated and required for optimal receptor signaling. Palmitoylated by ZDHHC3 in the Golgi regulates TLR9 trafficking from the Golgi to endosomes. Depalmitoylation by PPT1 controls the release of TLR9 from UNC93B1 in endosomes. As to expression, expressed in airway epithelium, vascular endothelium and inflammatory cells in blood vessels of the lungs (at protein level). Highly expressed in pulmonary intravascular macrophages (PIMs) and to a lesser extent in alveolar macrophages, neutrophiles, type-II alveolar epithelial cells and bronchial epithelial cells of the lungs (at protein level). High constitutive intracellular expression in leukocytes including polymorphonuclear leukocytes (PMNs), CD4 and CD8 T cells (at protein level). Expressed throughout the respiratory tract including larynx, upper, middle and lower trachea, and bronchus in isolated equine respiratory epithelial cells (ERECs) and in fully differentiated ERECs cultured at the air-fluid interface (AFI) (at protein level). Constitutively expressed in peripheral blood mononuclear cells (PBMCs), lymph nodes and spleen. The level of expression in PBMCs is about 2- to 3-fold higher than that in lymph nodes and spleen. Very low expression in liver, heart, lung, kidney, small intestine, colon and stomach. Low expression in the airway tissue epithelium of the larynx, upper trachea, middle tranchea, lower trachea, bronchus and spleen, and more abundant expression in mesenteric lymph node. Not expressed in fully differentiated bronchus epithelial cells cultured at the AFI for four weeks. Expressed in gingival tissue.

It localises to the endoplasmic reticulum membrane. The protein localises to the endosome. Its subcellular location is the lysosome. It is found in the cytoplasmic vesicle. The protein resides in the phagosome. It localises to the cell membrane. The protein localises to the cytoplasm. Its subcellular location is the nucleus. Functionally, key component of innate and adaptive immunity. TLRs (Toll-like receptors) control host immune response against pathogens through recognition of molecular patterns specific to microorganisms. TLR9 is a nucleotide-sensing TLR which is activated by unmethylated cytidine-phosphate-guanosine (CpG) dinucleotides. Acts via MYD88 and TRAF6, leading to NF-kappa-B activation, cytokine secretion and the inflammatory response. Upon CpG stimulation, induces B-cell proliferation, activation, survival and antibody production. The sequence is that of Toll-like receptor 9 from Equus caballus (Horse).